A 263-amino-acid chain; its full sequence is Endonuclease 8 (263 aa).

The active-site Schiff-base intermediate with DNA is Pro2. Glu3 serves as the catalytic Proton donor. The Proton donor; for beta-elimination activity role is filled by Lys53. DNA is bound by residues Gln70, Arg125, and Asn169. The segment at 229-263 (KVFHRDGEACERCGGIIEKTTLSSRPFYWCPHCQK) adopts an FPG-type zinc-finger fold. Catalysis depends on Arg253, which acts as the Proton donor; for delta-elimination activity.

It belongs to the FPG family. It depends on Zn(2+) as a cofactor.

The catalysed reaction is 2'-deoxyribonucleotide-(2'-deoxyribose 5'-phosphate)-2'-deoxyribonucleotide-DNA = a 3'-end 2'-deoxyribonucleotide-(2,3-dehydro-2,3-deoxyribose 5'-phosphate)-DNA + a 5'-end 5'-phospho-2'-deoxyribonucleoside-DNA + H(+). Its function is as follows. Involved in base excision repair of DNA damaged by oxidation or by mutagenic agents. Acts as a DNA glycosylase that recognizes and removes damaged bases. Has a preference for oxidized pyrimidines, such as thymine glycol, 5,6-dihydrouracil and 5,6-dihydrothymine. Has AP (apurinic/apyrimidinic) lyase activity and introduces nicks in the DNA strand. Cleaves the DNA backbone by beta-delta elimination to generate a single-strand break at the site of the removed base with both 3'- and 5'-phosphates. This Salmonella arizonae (strain ATCC BAA-731 / CDC346-86 / RSK2980) protein is Endonuclease 8.